The chain runs to 474 residues: tRNA modification GTPase MnmE (474 aa).

Positions 28, 92, and 131 each coordinate (6S)-5-formyl-5,6,7,8-tetrahydrofolate. Residues 227 to 395 (GIPVAIVGTT…LKGELTQIME (169 aa)) form the TrmE-type G domain. N237 contacts K(+). Residues 237–242 (NVGKST), 256–262 (SDIHGTT), 281–284 (DTAG), and 376–378 (SAR) contribute to the GTP site. A Mg(2+)-binding site is contributed by S241. K(+)-binding residues include S256, I258, and T261. T262 provides a ligand contact to Mg(2+). K474 serves as a coordination point for (6S)-5-formyl-5,6,7,8-tetrahydrofolate.

This sequence belongs to the TRAFAC class TrmE-Era-EngA-EngB-Septin-like GTPase superfamily. TrmE GTPase family. In terms of assembly, homodimer. Heterotetramer of two MnmE and two MnmG subunits. K(+) serves as cofactor.

The protein localises to the cytoplasm. Its function is as follows. Exhibits a very high intrinsic GTPase hydrolysis rate. Involved in the addition of a carboxymethylaminomethyl (cmnm) group at the wobble position (U34) of certain tRNAs, forming tRNA-cmnm(5)s(2)U34. The polypeptide is tRNA modification GTPase MnmE (Porphyromonas gingivalis (strain ATCC BAA-308 / W83)).